The primary structure comprises 372 residues: Cytochrome b (372 aa).

A run of 4 helical transmembrane segments spans residues 25-45, 69-90, 105-125, and 170-190; these read FGSM…FLAI, WMMQ…YIHI, WLSG…GYVL, and FFAL…IHIM. Residues histidine 75 and histidine 89 each coordinate heme b. Residues histidine 174 and histidine 188 each contribute to the heme b site. Histidine 193 lines the a ubiquinone pocket. Transmembrane regions (helical) follow at residues 218 to 238, 280 to 300, 312 to 332, and 339 to 358; these read HKDM…MSFN, LGGA…PFTH, LMQF…WAAT, and FTTI…IMNP.

This sequence belongs to the cytochrome b family. In terms of assembly, the cytochrome bc1 complex contains 3 respiratory subunits (MT-CYB, CYC1 and UQCRFS1), 2 core proteins (UQCRC1 and UQCRC2) and probably 6 low-molecular weight proteins. It depends on heme b as a cofactor.

The protein resides in the mitochondrion inner membrane. Functionally, component of the ubiquinol-cytochrome c reductase complex (complex III or cytochrome b-c1 complex) that is part of the mitochondrial respiratory chain. The b-c1 complex mediates electron transfer from ubiquinol to cytochrome c. Contributes to the generation of a proton gradient across the mitochondrial membrane that is then used for ATP synthesis. The protein is Cytochrome b (MT-CYB) of Pantherophis bairdi (Baird's ratsnake).